A 506-amino-acid polypeptide reads, in one-letter code: ATP synthase subunit alpha, chloroplastic (506 aa).

170-177 is an ATP binding site; the sequence is GDRQTGKT. The residue at position 257 (T257) is a Phosphothreonine.

It belongs to the ATPase alpha/beta chains family. As to quaternary structure, F-type ATPases have 2 components, CF(1) - the catalytic core - and CF(0) - the membrane proton channel. CF(1) has five subunits: alpha(3), beta(3), gamma(1), delta(1), epsilon(1). CF(0) has four main subunits: a, b, b' and c.

It is found in the plastid. It localises to the chloroplast thylakoid membrane. It catalyses the reaction ATP + H2O + 4 H(+)(in) = ADP + phosphate + 5 H(+)(out). Functionally, produces ATP from ADP in the presence of a proton gradient across the membrane. The alpha chain is a regulatory subunit. The protein is ATP synthase subunit alpha, chloroplastic of Olimarabidopsis pumila (Dwarf rocket).